Consider the following 102-residue polypeptide: MFAIIETGGKQIKVEEGQEIYVEKLDVNEGDAFTFDKVLFVGGDAVKVGAPTVEGATVSATVNKQGRGKKITVFTYRRRKDSKRKKGHRQPYTKLTIDKINA.

A compositionally biased stretch (basic residues) spans Arg-79 to Pro-91. Residues Arg-79–Ala-102 form a disordered region.

It belongs to the bacterial ribosomal protein bL21 family. Part of the 50S ribosomal subunit. Contacts protein L20.

Its function is as follows. This protein binds to 23S rRNA in the presence of protein L20. The protein is Large ribosomal subunit protein bL21 of Staphylococcus carnosus (strain TM300).